Here is a 102-residue protein sequence, read N- to C-terminus: Small ribosomal subunit protein bS18 (102 aa).

Belongs to the bacterial ribosomal protein bS18 family. Part of the 30S ribosomal subunit. Forms a tight heterodimer with protein bS6.

Binds as a heterodimer with protein bS6 to the central domain of the 16S rRNA, where it helps stabilize the platform of the 30S subunit. This Orientia tsutsugamushi (strain Ikeda) (Rickettsia tsutsugamushi) protein is Small ribosomal subunit protein bS18.